The following is a 208-amino-acid chain: Small ribosomal subunit protein uS4 (208 aa).

A disordered region spans residues 28–48; the sequence is YMERRPYGPGEHGRARKKQDS. Residues 95–160 form the S4 RNA-binding domain; the sequence is MRLDALVLRA…MPPFQVAAAG (66 aa).

This sequence belongs to the universal ribosomal protein uS4 family. Part of the 30S ribosomal subunit. Contacts protein S5. The interaction surface between S4 and S5 is involved in control of translational fidelity.

In terms of biological role, one of the primary rRNA binding proteins, it binds directly to 16S rRNA where it nucleates assembly of the body of the 30S subunit. With S5 and S12 plays an important role in translational accuracy. This is Small ribosomal subunit protein uS4 from Arthrobacter sp. (strain FB24).